The primary structure comprises 54 residues: MSKKLAKKRQPVKPVVAKEPARTAKNFGYEEMLSELEAIVADAETRLAEDEATA.

This is an uncharacterized protein from Escherichia coli (strain K12).